A 54-amino-acid chain; its full sequence is UPF0057 membrane protein ssr1169 (54 aa).

2 helical membrane-spanning segments follow: residues 3–23 (IVKI…QVGI) and 31–51 (LLLT…WVIA).

It belongs to the UPF0057 (PMP3) family.

Its subcellular location is the cell membrane. The sequence is that of UPF0057 membrane protein ssr1169 from Synechocystis sp. (strain ATCC 27184 / PCC 6803 / Kazusa).